Here is a 224-residue protein sequence, read N- to C-terminus: Peptidyl-prolyl cis-trans isomerase CYP21-1 (224 aa).

An N-terminal signal peptide occupies residues M1–A27. The PPIase cyclophilin-type domain occupies F50–E214. The N-linked (GlcNAc...) asparagine glycan is linked to N158.

It belongs to the cyclophilin-type PPIase family. Ubiquitous.

It localises to the endoplasmic reticulum. It catalyses the reaction [protein]-peptidylproline (omega=180) = [protein]-peptidylproline (omega=0). In terms of biological role, PPIases accelerate the folding of proteins. It catalyzes the cis-trans isomerization of proline imidic peptide bonds in oligopeptides. The protein is Peptidyl-prolyl cis-trans isomerase CYP21-1 (CYP21-1) of Arabidopsis thaliana (Mouse-ear cress).